Reading from the N-terminus, the 883-residue chain is MSELLFSLNFLLLLLLSCVSPSSFFTFNNPVVGLGACGPHQIQAFTQFKNEFDTRACNHSDPWNGVWCDDSTGAVTMLQLRACLSGTLKPNSSLFQFHHLRSLLLPHNNFTSSSISSKFGMLNNLEVLSLSSSGFLAQVPFSFSNLSMLSALVLSNNDLTGSLSFARNLRKLRVLDVSYNHFSGILNPNSSLFELHHIIYLNLRYNNFTSSSLPYEFGNLNKLEVLDVSSNSFFGQVPPTISNLTQLTELYLPLNHFTGSLPLVQNLTKLSILHLFGNHFSGTIPSSLFTMPFLSYLSLKGNNLNGSIEVPNSSSSSRLESLHLGENHFEGKILEPISKLINLKELDLSFLNTSYPIDLSLFSSLKSLLLLDLSGDWISKASLTLDSYIPSTLEVLRLEHCDISDFPNVFKTLHNLEYIALSNNRISGKFPEWLWSLPRLSSVFITDNLLTGFEGSSEVLVNSSVQILSLDTNSLEGALPHLPLSINYFSAIDNRFGGDIPLSICNRSSLDVLDLSYNNFTGPIPPCLSNLLYLKLRKNNLEGSIPDKYYEDTPLRSLDVGYNRLTGKLPRSLINCSALQFLSVDHNGIKDTFPFSLKALPKLQVLLLSSNKFYGPLSPPNEGPLGFPELRILEIAGNKLTGSLSSDFFVNWKASSHTMNEDLGLYMVYGKVIFGNYHLTYYETIDLRYKGLSMEQRNVLTSSATIDFSGNRLEGEIPESIGLLKALIALNLSNNAFTGHIPLSFANLKKMESLDLSSNQLSGTIPNGLRTLSFLAYVNVSHNQLIGEIPQGTQITGQPKSSFEGNAGLCGFPLQESCFGTNTPPAQHPKEQEEEEEDEQVLNWKAVAIGYGIGVLLGLAIAQLISLYKPKWLASLVIKSRNC.

A signal peptide spans 1–21 (MSELLFSLNFLLLLLLSCVSP). Topologically, residues 22-846 (SSFFTFNNPV…EDEQVLNWKA (825 aa)) are extracellular. N-linked (GlcNAc...) asparagine glycosylation is found at Asn58, Asn91, and Asn109. 2 LRR repeats span residues 97-121 (FHHLRSLLLPHNNFTSSSISSKFGM) and 122-143 (LNNLEVLSLSSSGFLAQVPFSF). A glycan (N-linked (GlcNAc...) asparagine) is linked at Asn145. 14 LRR repeats span residues 146–169 (LSMLSALVLSNNDLTGSLSFARNL), 170–195 (RKLRVLDVSYNHFSGILNPNSSLFEL), 197–219 (HIIYLNLRYNNFTSSSLPYEFGN), 220–244 (LNKLEVLDVSSNSFFGQVPPTISNL), 246–267 (QLTELYLPLNHFTGSLPLVQNL), 268–291 (TKLSILHLFGNHFSGTIPSSLFTM), 293–316 (FLSYLSLKGNNLNGSIEVPNSSSS), 317–340 (SRLESLHLGENHFEGKILEPISKL), 342–364 (NLKELDLSFLNTSYPIDLSLFSS), 365–390 (LKSLLLLDLSGDWISKASLTLDSYIP), 391–412 (STLEVLRLEHCDISDFPNVFKT), 413–437 (LHNLEYIALSNNRISGKFPEWLWSL), 439–462 (RLSSVFITDNLLTGFEGSSEVLVN), and 463–486 (SSVQILSLDTNSLEGALPHLPLSI). Asn189, Asn207, Asn243, and Asn266 each carry an N-linked (GlcNAc...) asparagine glycan. Residues Asn305 and Asn312 are each glycosylated (N-linked (GlcNAc...) asparagine). An N-linked (GlcNAc...) asparagine glycan is attached at Asn352. A glycan (N-linked (GlcNAc...) asparagine) is linked at Asn462. The LRR 17; degenerate repeat unit spans residues 487-506 (NYFSAIDNRFGGDIPLSICN). Asn506 and Asn519 each carry an N-linked (GlcNAc...) asparagine glycan. LRR repeat units lie at residues 507–528 (RSSLDVLDLSYNNFTGPIPPCL), 529–552 (SNLLYLKLRKNNLEGSIPDKYYED), 554–576 (PLRSLDVGYNRLTGKLPRSLINC), 578–600 (ALQFLSVDHNGIKDTFPFSLKAL), 601–624 (PKLQVLLLSSNKFYGPLSPPNEGP), 627–651 (FPELRILEIAGNKLTGSLSSDFFVN), 701–724 (TSSATIDFSGNRLEGEIPESIGLL), 725–747 (KALIALNLSNNAFTGHIPLSFAN), 748–772 (LKKMESLDLSSNQLSGTIPNGLRTL), and 774–797 (FLAYVNVSHNQLIGEIPQGTQITG). The N-linked (GlcNAc...) asparagine glycan is linked to Asn575. Asn731 is a glycosylation site (N-linked (GlcNAc...) asparagine). The N-linked (GlcNAc...) asparagine glycan is linked to Asn779. The helical transmembrane segment at 847-867 (VAIGYGIGVLLGLAIAQLISL) threads the bilayer. Residues 868–883 (YKPKWLASLVIKSRNC) are Cytoplasmic-facing.

It belongs to the RLP family.

Its subcellular location is the cell membrane. The protein is Receptor-like protein 40 of Arabidopsis thaliana (Mouse-ear cress).